The primary structure comprises 139 residues: Large ribosomal subunit protein uL16 (139 aa).

The protein belongs to the universal ribosomal protein uL16 family. As to quaternary structure, part of the 50S ribosomal subunit.

In terms of biological role, binds 23S rRNA and is also seen to make contacts with the A and possibly P site tRNAs. In Treponema denticola (strain ATCC 35405 / DSM 14222 / CIP 103919 / JCM 8153 / KCTC 15104), this protein is Large ribosomal subunit protein uL16.